A 1756-amino-acid polypeptide reads, in one-letter code: Periplakin (1756 aa).

Ser-14 carries the post-translational modification Phosphoserine. Coiled-coil stretches lie at residues 16–125 (TVQT…KQIY) and 188–389 (KEQN…QQVV). Spectrin repeat units follow at residues 216–317 (QDYM…SHLK), 323–485 (HQFH…RTLQ), 505–612 (RQLL…EKVD), and 733–861 (EHFH…QNLE). The region spanning 399–455 (LKPIPVEALCDFEGEQGLISRGYSYTLQKNNGESWELMDSAGNKLIAPAVCFVIPPT) is the SH3 domain. A Phosphoserine modification is found at Ser-465. Coiled coils occupy residues 585 to 820 (LLRT…GRRS) and 886 to 1645 (DSGV…SVAV). Phosphoserine occurs at positions 887, 949, 1584, and 1657. The tract at residues 1557 to 1756 (ELDFLREENH…ELAVLVSGQK (200 aa)) is interacts with BFSP2 and VIM. 2 Plectin repeats span residues 1651-1685 (ENHLRRSIVVIHPDTGRELSPEEAHRAGLIDWNMF) and 1700-1735 (VKGPNGESSVIHDRKSGKKFSIEEALQSGRLTPAQY).

It belongs to the plakin or cytolinker family. In terms of assembly, homodimer or a heterodimer with EVPL. Found in a complex composed of PPL (via C-terminal linker domain), BFSP1 and BFSP2 in the retinal lens. Within the complex interacts (via C-terminal linker domain) with BFSP2. Interacts with VIM. Binds to the PH domain of AKT1. Interacts with FCGR1A. May interact with PPHLN1. In terms of tissue distribution, expressed in stratified squamous epithelia and in some other epithelia.

The protein localises to the cell junction. It is found in the desmosome. It localises to the cytoplasm. The protein resides in the cytoskeleton. Its subcellular location is the cell membrane. Functionally, component of the cornified envelope of keratinocytes. May link the cornified envelope to desmosomes and intermediate filaments. May act as a localization signal in PKB/AKT-mediated signaling. This is Periplakin (PPL) from Homo sapiens (Human).